Reading from the N-terminus, the 571-residue chain is Streptolysin O (571 aa).

An N-terminal signal peptide occupies residues 1–33 (MSNKKTFKKYSRVAGLLTAALIIGNLVTANAES). Positions 30-108 (NAESNKQNTA…KKSEEDHTEE (79 aa)) are disordered. Residues 37–48 (NTASTETTTTNE) are compositionally biased toward low complexity. Composition is skewed to basic and acidic residues over residues 50–68 (PKPESSELTTEKAGQKTDD) and 79–108 (APKEMPLESAEKEEKKSEDKKKSEEDHTEE). 4 consecutive transmembrane segments (beta stranded) span residues 260–273 (KSQIEAALNVNSKI), 280–289 (IDFKSISKGE), 358–367 (SNDVEAAFSA), and 375–387 (KTNGKYSDILENS). The short motif at 529 to 539 (ECTGLAWEWWR) is the Conserved undecapeptide element. Residues 561–562 (TL) carry the Cholesterol binding motif.

The protein belongs to the cholesterol-dependent cytolysin family. As to quaternary structure, homooligomeric pore complex of 35 to 50 subunits; when inserted in the host membrane.

It localises to the secreted. The protein localises to the host cell membrane. Functionally, a cholesterol-dependent toxin that causes cytolysis by forming pores in cholesterol containing host membranes. After binding to target membranes, the protein undergoes a major conformation change, leading to its insertion in the host membrane and formation of an oligomeric pore complex. Cholesterol is required for binding to host membranes, membrane insertion and pore formation; cholesterol binding is mediated by a Thr-Leu pair in the C-terminus. Can be reversibly inactivated by oxidation. The protein is Streptolysin O (slo) of Streptococcus pyogenes serotype M18 (strain MGAS8232).